Consider the following 263-residue polypeptide: Isoprenyl transferase (263 aa).

The active site involves D38. D38 serves as a coordination point for Mg(2+). Substrate contacts are provided by residues 39 to 42 (GNRR), H55, and 83 to 85 (STD). Catalysis depends on N86, which acts as the Proton acceptor. Substrate contacts are provided by residues F87, R89, R212, and 218-220 (RLS). E231 contacts Mg(2+).

It belongs to the UPP synthase family. As to quaternary structure, homodimer. It depends on Mg(2+) as a cofactor.

In terms of biological role, catalyzes the condensation of isopentenyl diphosphate (IPP) with allylic pyrophosphates generating different type of terpenoids. The sequence is that of Isoprenyl transferase from Thermus thermophilus (strain ATCC 27634 / DSM 579 / HB8).